The following is a 638-amino-acid chain: LIM domain kinase 2 (638 aa).

LIM zinc-binding domains are found at residues 12-63 and 72-124; these read CQGC…CHKD and CHGC…CGKC. Residues 152-239 form the PDZ domain; that stretch reads HISMPATTEG…TLQLLIEHDP (88 aa). A disordered region spans residues 280–304; the sequence is RRRSLRRSNSISKSPGPSSPKEPLL. The segment covering 286-304 has biased composition (low complexity); the sequence is RSNSISKSPGPSSPKEPLL. Ser293 and Ser298 each carry phosphoserine. The Protein kinase domain maps to 331 to 608; sequence LIHGEVLGKG…DFFEALSLYL (278 aa). ATP contacts are provided by residues 337-345 and Asn360; that span reads LGKGFFGQA. The active site involves Asp451. Residue Thr505 is modified to Phosphothreonine; by ROCK1 and CDC42BP.

This sequence belongs to the protein kinase superfamily. TKL Ser/Thr protein kinase family. In terms of assembly, binds ROCK1 and MARF1. Interacts with NISCH. Phosphorylated on serine and/or threonine residues by ROCK1.

The protein localises to the cytoplasm. Its subcellular location is the cytoskeleton. It localises to the spindle. It is found in the microtubule organizing center. The protein resides in the centrosome. The enzyme catalyses L-seryl-[protein] + ATP = O-phospho-L-seryl-[protein] + ADP + H(+). The catalysed reaction is L-threonyl-[protein] + ATP = O-phospho-L-threonyl-[protein] + ADP + H(+). Its function is as follows. Serine/threonine-protein kinase that plays an essential role in the regulation of actin filament dynamics. Acts downstream of several Rho family GTPase signal transduction pathways. Involved in astral microtubule organization and mitotic spindle orientation during early stages of mitosis by mediating phosphorylation of TPPP. Displays serine/threonine-specific phosphorylation of myelin basic protein and histone (MBP) in vitro. Suppresses ciliogenesis via multiple pathways; phosphorylation of CFL1, suppression of directional trafficking of ciliary vesicles to the ciliary base, and by facilitating YAP1 nuclear localization where it acts as a transcriptional corepressor of the TEAD4 target genes AURKA and PLK1. This Bos taurus (Bovine) protein is LIM domain kinase 2 (LIMK2).